Here is an 845-residue protein sequence, read N- to C-terminus: Beta-glucosidase B (845 aa).

Asn-202 carries an N-linked (GlcNAc...) asparagine glycan. The active site involves Asp-230. N-linked (GlcNAc...) asparagine glycosylation is present at Asn-235. Positions 406 to 557 (EGQPGWTLDF…HNRDLLSEAV (152 aa)) constitute a PA14 domain. N-linked (GlcNAc...) asparagine glycans are attached at residues Asn-591, Asn-612, and Asn-794.

Belongs to the glycosyl hydrolase 3 family.

It catalyses the reaction Hydrolysis of terminal, non-reducing beta-D-glucosyl residues with release of beta-D-glucose.. It participates in glycan metabolism; cellulose degradation. Its function is as follows. Beta-glucosidases are one of a number of cellulolytic enzymes involved in the degradation of cellulosic biomass. Catalyzes the last step releasing glucose from the inhibitory cellobiose. This is Beta-glucosidase B (bglB) from Emericella nidulans (strain FGSC A4 / ATCC 38163 / CBS 112.46 / NRRL 194 / M139) (Aspergillus nidulans).